Reading from the N-terminus, the 2034-residue chain is Host cell factor 1 (2034 aa).

The residue at position 2 (Ala2) is an N-acetylalanine. Ser6 bears the Phosphoserine mark. 5 Kelch repeats span residues 44–89 (LIVV…GFVC), 93–140 (RLLV…RLGH), 148–194 (KCYL…ITYG), 217–265 (KLVI…TIGN), and 266–313 (KMYV…LMDT). Glycyl lysine isopeptide (Lys-Gly) (interchain with G-Cter in ubiquitin) cross-links involve residues Lys105, Lys163, and Lys244. Residue Lys282 forms a Glycyl lysine isopeptide (Lys-Gly) (interchain with G-Cter in SUMO2) linkage. Lys288 carries the post-translational modification N6-acetyllysine. Lys363 participates in a covalent cross-link: Glycyl lysine isopeptide (Lys-Gly) (interchain with G-Cter in ubiquitin). The Fibronectin type-III 1 domain maps to 366–469 (PPARVQLVRA…TIQVLPTVPG (104 aa)). A disordered region spans residues 407–434 (ATATSPTPNPVPSVPANPPKSPAPAAAA). At Ser411 the chain carries Phosphoserine. A compositionally biased stretch (pro residues) spans 413–428 (TPNPVPSVPANPPKSP). Positions 500–550 (LVTMRPASQAGKAPVTVTSLPASVRMVVPTQSAQGTVIGSNPQMSGMAALA) are required for interaction with OGT. Omega-N-methylarginine is present on residues Arg504 and Arg524. Phosphoserine is present on residues Ser598, Ser666, and Ser669. The tract at residues 610-722 (LKTAAAQVGT…KGPLPAGTIL (113 aa)) is interaction with SIN3A. The segment at 750-902 (ILGISSVSPS…SLAGAGAHST (153 aa)) is interaction with ZBTB17. Lys813 is modified (N6-acetyllysine). The segment at 813–912 (KIITAVPKIA…SASLATPITT (100 aa)) is interaction with GABP2. HCF repeat repeat units lie at residues 1010-1035 (TLVC…TVVA), 1072-1097 (VRVC…ATSN), and 1101-1126 (QHGC…AMSS). The HCF repeat 4; degenerate repeat unit spans residues 1156-1182 (RAQGTVKPPCQTQQTNMTSTTMTVQAT). Ser1204 and Ser1223 each carry phosphoserine. 4 disordered regions span residues 1221 to 1241 (GPSS…TYTT), 1302 to 1374 (PCET…TTST), 1444 to 1477 (TVTS…NITS), and 1491 to 1525 (RAVT…QLPP). HCF repeat repeat units follow at residues 1295–1320 (TQVC…SNAG) and 1323–1348 (QRVC…ATSN). The span at 1308 to 1321 (TGTTNTATTSNAGS) shows a compositional bias: low complexity. An HCF repeat 7; degenerate repeat occupies 1358-1383 (QQPASGHPCETHQTTSTGTTMSVSVG). The stretch at 1423–1448 (QRVCSNPPCETHETGTTHTATTVTSN) is one HCF repeat 8 repeat. The span at 1491–1501 (RAVTTVTQSTP) shows a compositional bias: low complexity. Position 1500 is a phosphothreonine (Thr1500). Positions 1502-1511 (VPGPSVPPPE) are enriched in pro residues. 2 positions are modified to phosphoserine: Ser1506 and Ser1516. The stretch at 1693-1723 (IVLTQQELAALVQQQQQLQEAQAQAQQQHHL) forms a coiled coil. Ser1782 bears the Phosphoserine mark. Fibronectin type-III domains follow at residues 1808–1899 (LPPP…TCLP) and 1901–2017 (FPGA…TSKD). Glycyl lysine isopeptide (Lys-Gly) (interchain with G-Cter in ubiquitin) cross-links involve residues Lys1818 and Lys1819. Ser1849 is modified (phosphoserine). The disordered stretch occupies residues 2005–2034 (ATQVRWLQETSKDSSGTKPASKRPMSSPEM). Lys2016 carries the post-translational modification N6-acetyllysine.

In terms of assembly, composed predominantly of six polypeptides ranging from 110 to 150 kDa and a minor 300 kDa polypeptide. The majority of N- and C-terminal cleavage products remain tightly, albeit non-covalently, associated. Interacts with POU2F1, CREB3, ZBTB17, EGR2, E2F4, CREBZF, SP1, GABP2, Sin3 HDAC complex (SIN3A, HDAC1, HDAC2, SUDS3), SAP30, SIN3B and FHL2. Component of a MLL1 complex, composed of at least the core components KMT2A/MLL1, ASH2L, HCFC1, WDR5 and RBBP5, as well as the facultative components BACC1, CHD8, DPY30, E2F6, HCFC2, HSP70, INO80C, KANSL1, LAS1L, MAX, MCRS1, MEN1, MGA, KAT8, PELP1, PHF20, PRP31, RING2, RUVBL1, RUVBL2, SENP3, TAF1, TAF4, TAF6, TAF7, TAF9 and TEX10. Component of a THAP1/THAP3-HCFC1-OGT complex that is required for the regulation of the transcriptional activity of RRM1. Interacts directly with THAP3 (via its HBM). Interacts (via the Kelch-repeat domain) with THAP1 (via the HBM); the interaction recruits HCHC1 to the RRM1. Interacts with THAP7 and THAP11 (via the HMB). Interacts directly with OGT; the interaction, which requires the HCFC1 cleavage site domain, glycosylates and promotes the proteolytic processing of HCFC1, retains OGT in the nucleus and impacts the expression of herpes simplex virus immediate early viral genes. Component of the SET1 complex, at least composed of the catalytic subunit (SETD1A or SETD1B), WDR5, WDR82, RBBP5, ASH2L, CXXC1, HCFC1 and DPY30. Component of the NSL complex at least composed of MOF/KAT8, KANSL1, KANSL2, KANSL3, MCRS1, PHF20, OGT1/OGT, WDR5 and HCFC1. Component of a complex at least composed of ZNF335, HCFC1, CCAR2, EMSY, MKI67, RBBP5, ASH2L and WDR5; the complex is formed as a result of interactions between components of a nuclear receptor-mediated transcription complex and a histone methylation complex. Within the complex interacts with ZNF335. Interacts with TET2 and TET3. Interacts with HCFC1R1. Interacts with THAP11. Interacts (via Kelch domain) with KMT2E/MLL5 isoform 3 (via HBM motif). Interacts with E2F1. Accessory scaffold component of the polycomb repressive deubiquitinase (PR-DUB) complex, at least composed of BAP1, one of ASXL1, ASXL2 or (probably) ASXL3 and one of MBD5 or MBD6; the PR-DUB core associates with a number of accessory proteins, including FOXK1, FOXK2, KDM1B, HCFC1, YY1 and OGT. Interacts with YY1 (via Gly-rich region); the interaction is direct. Interacts with BAP1 (via HBM-like motif). Post-translationally, proteolytically cleaved at one or several PPCE--THET sites within the HCF repeats. Further cleavage of the primary N- and C-terminal chains results in a 'trimming' and accumulation of the smaller chains. Cleavage is promoted by O-glycosylation. In terms of processing, O-glycosylated. GlcNAcylation by OGT promotes proteolytic processing. Ubiquitinated. Lys-1818 and Lys-1819 are ubiquitinated both via 'Lys-48'- and 'Lys-63'-linked polyubiquitin chains. BAP1 mediated deubiquitination of 'Lys-48'-linked polyubiquitin chains; deubiquitination by BAP1 does not seem to stabilize the protein.

The protein localises to the cytoplasm. The protein resides in the nucleus. Transcriptional coregulator. Serves as a scaffold protein, bridging interactions between transcription factors, including THAP11 and ZNF143, and transcriptional coregulators. Involved in control of the cell cycle. Also antagonizes transactivation by ZBTB17 and GABP2; represses ZBTB17 activation of the p15(INK4b) promoter and inhibits its ability to recruit p300. Coactivator for EGR2 and GABP2. Tethers the chromatin modifying Set1/Ash2 histone H3 'Lys-4' methyltransferase (H3K4me) and Sin3 histone deacetylase (HDAC) complexes (involved in the activation and repression of transcription, respectively) together. Component of a THAP1/THAP3-HCFC1-OGT complex that is required for the regulation of the transcriptional activity of RRM1. As part of the NSL complex it may be involved in acetylation of nucleosomal histone H4 on several lysine residues. Recruits KMT2E/MLL5 to E2F1 responsive promoters promoting transcriptional activation and thereby facilitates G1 to S phase transition. Modulates expression of homeobox protein PDX1, perhaps acting in concert with transcription factor E2F1, thereby regulating pancreatic beta-cell growth and glucose-stimulated insulin secretion. May negatively modulate transcriptional activity of FOXO3. The polypeptide is Host cell factor 1 (Rattus norvegicus (Rat)).